We begin with the raw amino-acid sequence, 139 residues long: Protein cornichon homolog 4 (139 aa).

3 helical membrane-spanning segments follow: residues 5–25 (VFVFSLLDCCALIFLSVYFII), 57–77 (LVTVLMLISLHWFIFLLNLPV), and 118–138 (LGFHLLCFFMYLYSMILALIN).

Belongs to the cornichon family. In terms of assembly, interacts with Sec23/24 complex components SEC24B and SEC24D. Interacts with CCR5. Interacts with ADRB2 in the early secretory pathway.

The protein resides in the membrane. Its subcellular location is the endoplasmic reticulum. The protein localises to the endoplasmic reticulum-Golgi intermediate compartment. Functionally, involved in G protein-coupled receptors (GPCRs) trafficking from the endoplasmic reticulum to the cell surface; it promotes the exit of GPCRs from the early secretory pathway, likely through interaction with the COPII machinery. This is Protein cornichon homolog 4 (CNIH4) from Bos taurus (Bovine).